The primary structure comprises 276 residues: MQNDPIGLMDSGVGGLTVLKEVQRLLPTENTVFLGDQARLPYGPRSVAEVTMFTKQIAQFLRQQARIKALVIACNTATAAALTTMQQTLPIPVIGVIAPGAQAAVQTTRNHRIGVIATAGTVKSDQYRRDILAAAPNSQIFSVACPEMVTLAEQNDLTTTHAQSVVAANLASLMDKKIDTLVMGCTHFPLLRSAIQHAVGSQVTLVDPGLATAEQTVAILKTRGLLNSATTRGTAQFFTTGETDQFDTLASQWLDQQPTPAKHVAIAQLTTPMEVN.

Residues 10–11 (DS) and 42–43 (YG) each bind substrate. The active-site Proton donor/acceptor is C74. 75 to 76 (NT) is a substrate binding site. The Proton donor/acceptor role is filled by C185. A substrate-binding site is contributed by 186-187 (TH).

It belongs to the aspartate/glutamate racemases family.

It catalyses the reaction L-glutamate = D-glutamate. It participates in cell wall biogenesis; peptidoglycan biosynthesis. In terms of biological role, provides the (R)-glutamate required for cell wall biosynthesis. This chain is Glutamate racemase, found in Levilactobacillus brevis (Lactobacillus brevis).